A 132-amino-acid polypeptide reads, in one-letter code: Large ribosomal subunit protein uL14 (132 aa).

It belongs to the universal ribosomal protein uL14 family. As to quaternary structure, part of the 50S ribosomal subunit. Forms a cluster with proteins L3 and L24e, part of which may contact the 16S rRNA in 2 intersubunit bridges.

Its function is as follows. Binds to 23S rRNA. Forms part of two intersubunit bridges in the 70S ribosome. The protein is Large ribosomal subunit protein uL14 of Natronomonas pharaonis (strain ATCC 35678 / DSM 2160 / CIP 103997 / JCM 8858 / NBRC 14720 / NCIMB 2260 / Gabara) (Halobacterium pharaonis).